A 390-amino-acid chain; its full sequence is Probable tRNA sulfurtransferase (390 aa).

The THUMP domain occupies 60-162 (KQIIDDLKEV…YDCAIVYGHK (103 aa)). Residues 180 to 181 (LL), 205 to 206 (TF), R264, G286, and Q295 each bind ATP.

The protein belongs to the ThiI family.

It localises to the cytoplasm. It carries out the reaction [ThiI sulfur-carrier protein]-S-sulfanyl-L-cysteine + a uridine in tRNA + 2 reduced [2Fe-2S]-[ferredoxin] + ATP + H(+) = [ThiI sulfur-carrier protein]-L-cysteine + a 4-thiouridine in tRNA + 2 oxidized [2Fe-2S]-[ferredoxin] + AMP + diphosphate. The enzyme catalyses [ThiS sulfur-carrier protein]-C-terminal Gly-Gly-AMP + S-sulfanyl-L-cysteinyl-[cysteine desulfurase] + AH2 = [ThiS sulfur-carrier protein]-C-terminal-Gly-aminoethanethioate + L-cysteinyl-[cysteine desulfurase] + A + AMP + 2 H(+). Its pathway is cofactor biosynthesis; thiamine diphosphate biosynthesis. Functionally, catalyzes the ATP-dependent transfer of a sulfur to tRNA to produce 4-thiouridine in position 8 of tRNAs, which functions as a near-UV photosensor. Also catalyzes the transfer of sulfur to the sulfur carrier protein ThiS, forming ThiS-thiocarboxylate. This is a step in the synthesis of thiazole, in the thiamine biosynthesis pathway. The sulfur is donated as persulfide by IscS. This is Probable tRNA sulfurtransferase from Ureaplasma parvum serovar 3 (strain ATCC 27815 / 27 / NCTC 11736).